Reading from the N-terminus, the 356-residue chain is 16-methoxy-2,3-dihydro-3-hydroxytabersonine synthase (356 aa).

Residues cysteine 49, histidine 71, cysteine 102, cysteine 105, cysteine 108, cysteine 116, and cysteine 162 each coordinate Zn(2+). 187-192 (GLGAVG) contributes to the NAD(+) binding site.

It belongs to the zinc-containing alcohol dehydrogenase family. The cofactor is Zn(2+). As to expression, expressed in leaf epidermis.

It carries out the reaction (3R)-3-hydroxy-16-methoxy-2,3-dihydrotabersonine + A = (3R)-1,2-didehydro-3-hydroxy-16-methoxy-2,3-dihydrotabersonine + AH2. It catalyses the reaction (3R)-3-hydroxy-2,3-dihydrotabersonine + A = (3R)-1,2-didehydro-3-hydroxy-2,3-dihydrotabersonine + AH2. It functions in the pathway alkaloid biosynthesis; vindoline biosynthesis. Its function is as follows. Converts the unstable imine alcohols produced by CYP71D1V2/T3O into 3-hydroxy-16-methoxy-2,3-dihydrotabersonine or 3-hydroxy-2,3-dihydrotabersonine. The protein is 16-methoxy-2,3-dihydro-3-hydroxytabersonine synthase of Catharanthus roseus (Madagascar periwinkle).